Here is a 361-residue protein sequence, read N- to C-terminus: Holliday junction branch migration complex subunit RuvB (361 aa).

Composition is skewed to polar residues over residues Met1 to Val15 and Glu28 to Ala40. Positions Met1–Ser41 are disordered. The interval Pro13–Tyr203 is large ATPase domain (RuvB-L). Residues Leu42, Arg43, Gly84, Lys87, Thr88, Thr89, Glu150 to Phe152, Arg193, Tyr203, and Arg240 each bind ATP. Thr88 contacts Mg(2+). Residues Glu204 to Gln274 are small ATPAse domain (RuvB-S). A head domain (RuvB-H) region spans residues Lys277–Ser361. 2 residues coordinate DNA: Arg332 and Arg337.

This sequence belongs to the RuvB family. As to quaternary structure, homohexamer. Forms an RuvA(8)-RuvB(12)-Holliday junction (HJ) complex. HJ DNA is sandwiched between 2 RuvA tetramers; dsDNA enters through RuvA and exits via RuvB. An RuvB hexamer assembles on each DNA strand where it exits the tetramer. Each RuvB hexamer is contacted by two RuvA subunits (via domain III) on 2 adjacent RuvB subunits; this complex drives branch migration. In the full resolvosome a probable DNA-RuvA(4)-RuvB(12)-RuvC(2) complex forms which resolves the HJ.

It is found in the cytoplasm. It carries out the reaction ATP + H2O = ADP + phosphate + H(+). Functionally, the RuvA-RuvB-RuvC complex processes Holliday junction (HJ) DNA during genetic recombination and DNA repair, while the RuvA-RuvB complex plays an important role in the rescue of blocked DNA replication forks via replication fork reversal (RFR). RuvA specifically binds to HJ cruciform DNA, conferring on it an open structure. The RuvB hexamer acts as an ATP-dependent pump, pulling dsDNA into and through the RuvAB complex. RuvB forms 2 homohexamers on either side of HJ DNA bound by 1 or 2 RuvA tetramers; 4 subunits per hexamer contact DNA at a time. Coordinated motions by a converter formed by DNA-disengaged RuvB subunits stimulates ATP hydrolysis and nucleotide exchange. Immobilization of the converter enables RuvB to convert the ATP-contained energy into a lever motion, pulling 2 nucleotides of DNA out of the RuvA tetramer per ATP hydrolyzed, thus driving DNA branch migration. The RuvB motors rotate together with the DNA substrate, which together with the progressing nucleotide cycle form the mechanistic basis for DNA recombination by continuous HJ branch migration. Branch migration allows RuvC to scan DNA until it finds its consensus sequence, where it cleaves and resolves cruciform DNA. Its function is as follows. Participates in UV-tolerance of Synechocystis PCC 6803. The protein is Holliday junction branch migration complex subunit RuvB of Synechocystis sp. (strain ATCC 27184 / PCC 6803 / Kazusa).